We begin with the raw amino-acid sequence, 1254 residues long: DNA-directed RNA polymerase subunit beta' (1254 aa).

Zn(2+) is bound by residues C59, C61, C76, and C79. Residues D501, D503, and D505 each contribute to the Mg(2+) site. Zn(2+)-binding residues include C871, C946, C953, and C956.

The protein belongs to the RNA polymerase beta' chain family. The RNAP catalytic core consists of 2 alpha, 1 beta, 1 beta' and 1 omega subunit. When a sigma factor is associated with the core the holoenzyme is formed, which can initiate transcription. The cofactor is Mg(2+). Requires Zn(2+) as cofactor.

The enzyme catalyses RNA(n) + a ribonucleoside 5'-triphosphate = RNA(n+1) + diphosphate. DNA-dependent RNA polymerase catalyzes the transcription of DNA into RNA using the four ribonucleoside triphosphates as substrates. The protein is DNA-directed RNA polymerase subunit beta' of Mesoplasma florum (strain ATCC 33453 / NBRC 100688 / NCTC 11704 / L1) (Acholeplasma florum).